The chain runs to 333 residues: Ketol-acid reductoisomerase (NADP(+)) (333 aa).

One can recognise a KARI N-terminal Rossmann domain in the interval 2–182; the sequence is AKIYYDEDAS…GATRAGVIET (181 aa). NADP(+)-binding positions include 25–28, S51, S53, and 83–86; these read YGSQ and DTVQ. H108 is a catalytic residue. Position 134 (G134) interacts with NADP(+). Residues 183 to 327 form the KARI C-terminal knotted domain; that stretch reads TFKEETETDL…EELRKMMPWL (145 aa). Residues D191, E195, E227, and E231 each contribute to the Mg(2+) site. S252 serves as a coordination point for substrate.

It belongs to the ketol-acid reductoisomerase family. It depends on Mg(2+) as a cofactor.

It carries out the reaction (2R)-2,3-dihydroxy-3-methylbutanoate + NADP(+) = (2S)-2-acetolactate + NADPH + H(+). It catalyses the reaction (2R,3R)-2,3-dihydroxy-3-methylpentanoate + NADP(+) = (S)-2-ethyl-2-hydroxy-3-oxobutanoate + NADPH + H(+). It participates in amino-acid biosynthesis; L-isoleucine biosynthesis; L-isoleucine from 2-oxobutanoate: step 2/4. It functions in the pathway amino-acid biosynthesis; L-valine biosynthesis; L-valine from pyruvate: step 2/4. Involved in the biosynthesis of branched-chain amino acids (BCAA). Catalyzes an alkyl-migration followed by a ketol-acid reduction of (S)-2-acetolactate (S2AL) to yield (R)-2,3-dihydroxy-isovalerate. In the isomerase reaction, S2AL is rearranged via a Mg-dependent methyl migration to produce 3-hydroxy-3-methyl-2-ketobutyrate (HMKB). In the reductase reaction, this 2-ketoacid undergoes a metal-dependent reduction by NADPH to yield (R)-2,3-dihydroxy-isovalerate. The polypeptide is Ketol-acid reductoisomerase (NADP(+)) (Aquifex aeolicus (strain VF5)).